We begin with the raw amino-acid sequence, 168 residues long: Ribosome maturation factor RimM (168 aa).

A PRC barrel domain is found at 95–168 (KEGDYYWTDL…IIVVEWDADF (74 aa)).

Belongs to the RimM family. As to quaternary structure, binds ribosomal protein uS19.

The protein resides in the cytoplasm. An accessory protein needed during the final step in the assembly of 30S ribosomal subunit, possibly for assembly of the head region. Essential for efficient processing of 16S rRNA. May be needed both before and after RbfA during the maturation of 16S rRNA. It has affinity for free ribosomal 30S subunits but not for 70S ribosomes. This Coxiella burnetii (strain CbuK_Q154) (Coxiella burnetii (strain Q154)) protein is Ribosome maturation factor RimM.